The chain runs to 1060 residues: Carbamoyl phosphate synthase large chain (1060 aa).

A carboxyphosphate synthetic domain region spans residues 1–401; sequence MPKRQDIHKI…SLLKAVRSLE (401 aa). ATP-binding residues include Arg-129, Arg-169, Gly-175, Gly-176, Arg-208, Ile-210, Glu-215, Gly-241, Val-242, His-243, Gln-284, and Glu-298. One can recognise an ATP-grasp 1 domain in the interval 133–327; it reads KNLMQKLHEP…IAKMAAKIAV (195 aa). Positions 284, 298, and 300 each coordinate Mg(2+). Mn(2+)-binding residues include Gln-284, Glu-298, and Asn-300. Residues 402–546 form an oligomerization domain region; that stretch reads VGLIHPERPA…YSTYESSTES (145 aa). Positions 547–929 are carbamoyl phosphate synthetic domain; the sequence is VKSDKPSVLV…ALYKAFEAAG (383 aa). The region spanning 671–861 is the ATP-grasp 2 domain; sequence DQVIKSLKLP…LAQVATLAIL (191 aa). Residues Arg-707, His-746, Leu-748, Glu-752, Gly-777, Ile-778, His-779, Ser-780, Gln-820, and Glu-832 each contribute to the ATP site. Mg(2+) is bound by residues Gln-820, Glu-832, and Asn-834. Residues Gln-820, Glu-832, and Asn-834 each coordinate Mn(2+). The region spanning 930–1060 is the MGS-like domain; sequence MHLPQFGRAL…QAFSISPIKS (131 aa). Positions 930-1060 are allosteric domain; the sequence is MHLPQFGRAL…QAFSISPIKS (131 aa).

The protein belongs to the CarB family. In terms of assembly, composed of two chains; the small (or glutamine) chain promotes the hydrolysis of glutamine to ammonia, which is used by the large (or ammonia) chain to synthesize carbamoyl phosphate. Tetramer of heterodimers (alpha,beta)4. Requires Mg(2+) as cofactor. The cofactor is Mn(2+).

It carries out the reaction hydrogencarbonate + L-glutamine + 2 ATP + H2O = carbamoyl phosphate + L-glutamate + 2 ADP + phosphate + 2 H(+). The catalysed reaction is hydrogencarbonate + NH4(+) + 2 ATP = carbamoyl phosphate + 2 ADP + phosphate + 2 H(+). It functions in the pathway amino-acid biosynthesis; L-arginine biosynthesis; carbamoyl phosphate from bicarbonate: step 1/1. Its pathway is pyrimidine metabolism; UMP biosynthesis via de novo pathway; (S)-dihydroorotate from bicarbonate: step 1/3. Large subunit of the glutamine-dependent carbamoyl phosphate synthetase (CPSase). CPSase catalyzes the formation of carbamoyl phosphate from the ammonia moiety of glutamine, carbonate, and phosphate donated by ATP, constituting the first step of 2 biosynthetic pathways, one leading to arginine and/or urea and the other to pyrimidine nucleotides. The large subunit (synthetase) binds the substrates ammonia (free or transferred from glutamine from the small subunit), hydrogencarbonate and ATP and carries out an ATP-coupled ligase reaction, activating hydrogencarbonate by forming carboxy phosphate which reacts with ammonia to form carbamoyl phosphate. The protein is Carbamoyl phosphate synthase large chain of Lacticaseibacillus casei (strain BL23) (Lactobacillus casei).